Here is a 217-residue protein sequence, read N- to C-terminus: U2 snRNP component ist3 (217 aa).

One can recognise an RRM domain in the interval 31–109; sequence AYIYIGNLDF…RLVRVDHVAS (79 aa). Disordered regions lie at residues 119 to 138 and 154 to 217; these read PANL…STIN and EVEQ…DLDG. A compositionally biased stretch (polar residues) spans 128–138; that stretch reads SGSSLSVSTIN. Residue Ser-160 is modified to Phosphoserine. Basic and acidic residues-rich tracts occupy residues 161–176 and 185–198; these read PKDE…DYIH and HESS…DSNR. Residues 199-217 are compositionally biased toward basic residues; the sequence is HSRHHRRHSRSRRHRDLDG.

The protein belongs to the IST3 family. Belongs to the 40S cdc5-associated complex (or cwf complex), a spliceosome sub-complex reminiscent of a late-stage spliceosome composed of the U2, U5 and U6 snRNAs and at least brr2, cdc5, cwf2/prp3, cwf3/syf1, cwf4/syf3, cwf5/ecm2, spp42/cwf6, cwf7/spf27, cwf8, cwf9, cwf10, cwf11, cwf12, prp45/cwf13, cwf14, cwf15, cwf16, cwf17, cwf18, cwf19, cwf20, cwf21, cwf22, cwf23, cwf24, cwf25, cwf26, cyp7/cwf27, cwf28, cwf29/ist3, lea1, msl1, prp5/cwf1, prp10, prp12/sap130, prp17, prp22, sap61, sap62, sap114, sap145, slu7, smb1, smd1, smd3, smf1, smg1 and syf2.

The protein resides in the nucleus. Functionally, required for pre-mRNA splicing and spliceosome assembly. This chain is U2 snRNP component ist3 (cwf29), found in Schizosaccharomyces pombe (strain 972 / ATCC 24843) (Fission yeast).